A 146-amino-acid chain; its full sequence is Large ribosomal subunit protein uL15 (146 aa).

The interval 1-62 is disordered; it reads MRLHELRPKT…GQMPLQERLP (62 aa). A compositionally biased stretch (basic residues) spans 10–21; it reads TNYKKSRKRKGR. The segment covering 42 to 52 has biased composition (gly residues); that stretch reads TGGGVRPGFEG.

Belongs to the universal ribosomal protein uL15 family. As to quaternary structure, part of the 50S ribosomal subunit.

Functionally, binds to the 23S rRNA. The chain is Large ribosomal subunit protein uL15 from Natranaerobius thermophilus (strain ATCC BAA-1301 / DSM 18059 / JW/NM-WN-LF).